The following is a 326-amino-acid chain: Sulfate/thiosulfate import ATP-binding protein CysA (326 aa).

The 235-residue stretch at Ile-3–Leu-237 folds into the ABC transporter domain. ATP is bound at residue Gly-35–Thr-42.

This sequence belongs to the ABC transporter superfamily. Sulfate/tungstate importer (TC 3.A.1.6) family. The complex is composed of two ATP-binding proteins (CysA), two transmembrane proteins (CysT and CysW) and a solute-binding protein (CysP).

Its subcellular location is the cell inner membrane. The catalysed reaction is sulfate(out) + ATP + H2O = sulfate(in) + ADP + phosphate + H(+). The enzyme catalyses thiosulfate(out) + ATP + H2O = thiosulfate(in) + ADP + phosphate + H(+). In terms of biological role, part of the ABC transporter complex CysAWTP involved in sulfate/thiosulfate import. Responsible for energy coupling to the transport system. In Pseudomonas syringae pv. tomato (strain ATCC BAA-871 / DC3000), this protein is Sulfate/thiosulfate import ATP-binding protein CysA.